Here is a 396-residue protein sequence, read N- to C-terminus: S-adenosylmethionine synthase (396 aa).

Histidine 16 lines the ATP pocket. Residue aspartate 18 participates in Mg(2+) binding. Glutamate 44 is a K(+) binding site. 2 residues coordinate L-methionine: glutamate 57 and glutamine 100. The tract at residues 100 to 110 (QSVDINQGVDR) is flexible loop. Residues 165-167 (DAK), 231-232 (KF), aspartate 240, 246-247 (RK), alanine 263, and lysine 267 contribute to the ATP site. Aspartate 240 contributes to the L-methionine binding site. Residue lysine 271 participates in L-methionine binding.

The protein belongs to the AdoMet synthase family. In terms of assembly, homotetramer; dimer of dimers. Mg(2+) serves as cofactor. K(+) is required as a cofactor.

It localises to the cytoplasm. The catalysed reaction is L-methionine + ATP + H2O = S-adenosyl-L-methionine + phosphate + diphosphate. Its pathway is amino-acid biosynthesis; S-adenosyl-L-methionine biosynthesis; S-adenosyl-L-methionine from L-methionine: step 1/1. Functionally, catalyzes the formation of S-adenosylmethionine (AdoMet) from methionine and ATP. The overall synthetic reaction is composed of two sequential steps, AdoMet formation and the subsequent tripolyphosphate hydrolysis which occurs prior to release of AdoMet from the enzyme. In Azotobacter vinelandii (strain DJ / ATCC BAA-1303), this protein is S-adenosylmethionine synthase.